Here is a 430-residue protein sequence, read N- to C-terminus: MTTLTLNTSLLSSRRILAAFSGGLDSTVLLHQLVLWRERHPDVTLRAIHIHHGLSPHADSWVRHCETVCERWQVPLVVERVTLADNGLGIEAHAREARYRAFAQTLLPGEVLATAQHLDDQCETFLLALKRGSGPAGLSAMGERSPFAGTLLLRPLLRETRKTLEQWAVRHGLCWIEDESNQDDAYDRNFLRLRALPLLQQRWPHFPAAVARSATLCAAQERLLDELLASDLTDCITTEGTLRLSPLMSMSDVRRAAILRRWLAMRNAPMPSRDALERIWQEVALARDDASPCLRFGDHEIRRYQSQLWWIKSVAGQHETTVAWPAWQTPLALPAGLGTVQLVPGGELRRPREEESVSIRFKAPGVLHIVGRNGGRKLKKIWQEQGIPPWRRDTTPLLFYGETLIAAAGVFVTREGAAEDKEGVSLVWHA.

21 to 26 (SGGLDS) provides a ligand contact to ATP.

Belongs to the tRNA(Ile)-lysidine synthase family.

It is found in the cytoplasm. The enzyme catalyses cytidine(34) in tRNA(Ile2) + L-lysine + ATP = lysidine(34) in tRNA(Ile2) + AMP + diphosphate + H(+). Its function is as follows. Ligates lysine onto the cytidine present at position 34 of the AUA codon-specific tRNA(Ile) that contains the anticodon CAU, in an ATP-dependent manner. Cytidine is converted to lysidine, thus changing the amino acid specificity of the tRNA from methionine to isoleucine. This chain is tRNA(Ile)-lysidine synthase, found in Salmonella choleraesuis (strain SC-B67).